Reading from the N-terminus, the 271-residue chain is Fatty acid elongase 2 (271 aa).

A helical membrane pass occupies residues 16 to 36; sequence WMIDNVDVAGFLCLLYLGLVW. Residue Asn-52 is glycosylated (N-linked (GlcNAc...) asparagine). A run of 2 helical transmembrane segments spans residues 59–79 and 110–130; these read VFIM…IVVV and FWVG…VLLV. Residues 140–144 carry the HxxHH motif motif; sequence HWYHH. His-143 functions as the Nucleophile in the catalytic mechanism. Helical transmembrane passes span 162–182, 194–214, and 241–261; these read IFVF…YFAM, IAPV…AVTM, and GVVM…ESYL.

Belongs to the ELO family.

It localises to the endoplasmic reticulum membrane. It carries out the reaction an acyl-CoA + malonyl-CoA + H(+) = a 3-oxoacyl-CoA + CO2 + CoA. The protein operates within lipid metabolism; fatty acid biosynthesis. Its function is as follows. Involved in the synthesis of fatty acids. Elongates C10 fatty acids to C14. The protein is Fatty acid elongase 2 of Trypanosoma brucei brucei (strain 927/4 GUTat10.1).